A 50-amino-acid polypeptide reads, in one-letter code: Cytochrome c-555 (50 aa).

Residues cysteine 7, cysteine 10, histidine 11, and methionine 25 each contribute to the heme site.

Post-translationally, binds 1 heme group per subunit.

The protein resides in the cell membrane. The polypeptide is Cytochrome c-555 (Schinkia azotoformans (Bacillus azotoformans)).